The sequence spans 310 residues: Dicarboxylate carrier UCP2 (310 aa).

Residues 1–10 lie on the Mitochondrial intermembrane side of the membrane; that stretch reads MVGFRAGDVP. A helical transmembrane segment spans residues 11 to 32; sequence PTATVKFIGAGTAACIADLFTF. Solcar repeat units follow at residues 11–107, 115–204, and 213–298; these read PTAT…VKQF, AGIG…IKDA, and DDLP…LKRA. The Mitochondrial matrix portion of the chain corresponds to 33–78; sequence PLDTAKVRLQIQGENKASTNMGRGPVKYRGVFGTISTMVRVEGPRS. The chain crosses the membrane as a helical span at residues 79–101; that stretch reads LYSGLVAGLQRQMSFASVRIGLY. Over 102-120 the chain is Mitochondrial intermembrane; the sequence is DSVKQFYTKGSDHAGIGSR. The helical transmembrane segment at 121–137 threads the bilayer; the sequence is LMAGCTTGAMAVAVAQP. The Mitochondrial matrix portion of the chain corresponds to 138–181; the sequence is TDVLKVRFQAQVSAGASKRYHSTMDAYRTIAKEEGFRGLWKGTG. Residues 182-198 traverse the membrane as a helical segment; sequence PNITRNAIVNCTELVTY. Topologically, residues 199 to 215 are mitochondrial intermembrane; sequence DLIKDALLKSSLMTDDL. A helical membrane pass occupies residues 216–235; that stretch reads PCHFTSAFGAGFCTTIIASP. Residues 236–269 are Mitochondrial matrix-facing; sequence VDVVKTRYMNSAQGQYSSALNCAVAMLTKKGPKA. The helical transmembrane segment at 270–292 threads the bilayer; the sequence is FFKGFMPSFLRLGSWNVVMFVTY. The tract at residues 277 to 299 is purine nucleotide binding; that stretch reads SFLRLGSWNVVMFVTYEQLKRAM. Topologically, residues 293–310 are mitochondrial intermembrane; that stretch reads EQLKRAMMAARQNWHTPL.

The protein belongs to the mitochondrial carrier (TC 2.A.29) family. As to quaternary structure, homotetramer. Adopts an asymmetrical dimer of dimers functional form.

It localises to the mitochondrion inner membrane. The catalysed reaction is L-aspartate(out) + phosphate(in) + H(+)(in) = L-aspartate(in) + phosphate(out) + H(+)(out). The enzyme catalyses oxaloacetate(out) + phosphate(in) + H(+)(in) = oxaloacetate(in) + phosphate(out) + H(+)(out). It catalyses the reaction (S)-malate(out) + phosphate(in) + H(+)(in) = (S)-malate(in) + phosphate(out) + H(+)(out). It carries out the reaction malonate(out) + phosphate(in) + H(+)(in) = malonate(in) + phosphate(out) + H(+)(out). The catalysed reaction is sulfate(out) + phosphate(in) + H(+)(in) = sulfate(in) + phosphate(out) + H(+)(out). The enzyme catalyses (S)-malate(out) = (S)-malate(in). It catalyses the reaction L-aspartate(out) = L-aspartate(in). It carries out the reaction phosphate(in) = phosphate(out). The catalysed reaction is chloride(in) = chloride(out). The enzyme catalyses H(+)(in) = H(+)(out). It catalyses the reaction a long-chain fatty acid(out) = a long-chain fatty acid(in). Functionally, UCP are mitochondrial transporter proteins that create proton leaks across the inner mitochondrial membrane, thus uncoupling oxidative phosphorylation from ATP synthesis. As a result, energy is dissipated in the form of heat. Antiporter that exports dicarboxylate intermediates of the Krebs cycle in exchange for phosphate plus a proton across the inner membrane of mitochondria, a process driven by mitochondrial motive force with an overall impact on glycolysis, glutaminolysis and glutathione-dependent redox balance. Continuous export of oxaloacetate and related four-carbon dicarboxylates from mitochondrial matrix into the cytosol negatively regulates the oxidation of acetyl-CoA substrates via the Krebs cycle, lowering the ATP/ADP ratio and reactive oxygen species (ROS) production. May mediate inducible proton entry into the mitochondrial matrix affecting ATP turnover as a protection mechanism against oxidative stress. The proton currents are most likely associated with fatty acid flipping across the inner membrane of mitochondria in a metabolic process regulated by free fatty acids and purine nucleotides. The chain is Dicarboxylate carrier UCP2 (ucp2) from Danio rerio (Zebrafish).